Consider the following 272-residue polypeptide: Insulin-like growth factor-binding protein 1 (272 aa).

A signal peptide spans 1–25; sequence MPEFLTVVSWPFLILLSFQVRVVAG. One can recognise an IGFBP N-terminal domain in the interval 28 to 109; that stretch reads QPWHCAPCTA…TRGQGACVLE (82 aa). 6 disulfide bridges follow: C32/C59, C35/C61, C43/C62, C50/C65, C73/C86, and C80/C106. Positions 115–143 are disordered; the sequence is TSSLSGSQHEEAKAAVASEDELAESPEMT. Residues 132–143 are compositionally biased toward acidic residues; the sequence is SEDELAESPEMT. Residues S139, S157, and S169 each carry the phosphoserine modification. The residue at position 170 (T170) is a Phosphothreonine. Y171 carries the post-translational modification Phosphotyrosine. The region spanning 186–264 is the Thyroglobulin type-1 domain; the sequence is KEPCQRELYK…SLETRGDPNC (79 aa). 3 cysteine pairs are disulfide-bonded: C189/C219, C230/C241, and C243/C264. S255 carries the post-translational modification Phosphoserine. The Cell attachment site signature appears at 259–261; it reads RGD.

As to quaternary structure, binds equally well IGF1 and IGF2. Interacts with integrin ITGA5:ITGB1. Interacts with VHL; this interaction inhibits HIF1A degradation.

The protein localises to the secreted. Functionally, multifunctional protein that plays a critical role in regulating the availability of IGFs such as IGF1 and IGF2 to their receptors and thereby regulates IGF-mediated cellular processes including cell migration, proliferation, differentiation or apoptosis in a cell-type specific manner. Also plays a positive role in cell migration by interacting with integrin ITGA5:ITGB1 through its RGD motif. Mechanistically, binding to integrins leads to activation of focal adhesion kinase/PTK2 and stimulation of the mitogen-activated protein kinase (MAPK) pathway. Regulates cardiomyocyte apoptosis by suppressing HIF-1alpha/HIF1A ubiquitination and subsequent degradation. The chain is Insulin-like growth factor-binding protein 1 (Igfbp1) from Rattus norvegicus (Rat).